The sequence spans 159 residues: uncharacterized protein (159 aa).

Residues 1 to 13 are compositionally biased toward basic and acidic residues; the sequence is MESRPSGRQHASE. Residues 1 to 35 are disordered; sequence MESRPSGRQHASEGDGDQSPTQCAGMRSSGRSDQP.

This is an uncharacterized protein from Homo sapiens (Human).